A 31-amino-acid polypeptide reads, in one-letter code: Cytochrome b6-f complex subunit 6 (31 aa).

Residues 4 to 24 (ITSYFGFLLAALTITSALLIG) traverse the membrane as a helical segment.

Belongs to the PetL family. The 4 large subunits of the cytochrome b6-f complex are cytochrome b6, subunit IV (17 kDa polypeptide, PetD), cytochrome f and the Rieske protein, while the 4 small subunits are PetG, PetL, PetM and PetN. The complex functions as a dimer.

It localises to the plastid. Its subcellular location is the chloroplast thylakoid membrane. Component of the cytochrome b6-f complex, which mediates electron transfer between photosystem II (PSII) and photosystem I (PSI), cyclic electron flow around PSI, and state transitions. PetL is important for photoautotrophic growth as well as for electron transfer efficiency and stability of the cytochrome b6-f complex. This chain is Cytochrome b6-f complex subunit 6, found in Piper cenocladum (Ant piper).